Here is a 464-residue protein sequence, read N- to C-terminus: ATP synthase subunit beta 2 (464 aa).

147 to 154 (GGAGVGKT) provides a ligand contact to ATP.

Belongs to the ATPase alpha/beta chains family. F-type ATPases have 2 components, CF(1) - the catalytic core - and CF(0) - the membrane proton channel. CF(1) has five subunits: alpha(3), beta(3), gamma(1), delta(1), epsilon(1). CF(0) has four main subunits: a(1), b(1), b'(1) and c(9-12).

It is found in the cell inner membrane. It carries out the reaction ATP + H2O + 4 H(+)(in) = ADP + phosphate + 5 H(+)(out). Produces ATP from ADP in the presence of a proton gradient across the membrane. The catalytic sites are hosted primarily by the beta subunits. This is ATP synthase subunit beta 2 from Cereibacter sphaeroides (strain ATCC 17029 / ATH 2.4.9) (Rhodobacter sphaeroides).